Consider the following 177-residue polypeptide: Protein VERNALIZATION 3 (177 aa).

Belongs to the phosphatidylethanolamine-binding protein family. As to expression, expressed in leaves but not in shoot apex.

Involved in the regulation of vernalization and of flowering time; this process in essential for flowering in cv. Bd29-1 but seems do not occur in cv. Bd21. The sequence is that of Protein VERNALIZATION 3 from Brachypodium distachyon (Purple false brome).